The chain runs to 289 residues: Ribosomal RNA small subunit methyltransferase A (289 aa).

Residues N28, L30, G55, E76, D101, and N125 each contribute to the S-adenosyl-L-methionine site.

It belongs to the class I-like SAM-binding methyltransferase superfamily. rRNA adenine N(6)-methyltransferase family. RsmA subfamily.

Its subcellular location is the cytoplasm. The enzyme catalyses adenosine(1518)/adenosine(1519) in 16S rRNA + 4 S-adenosyl-L-methionine = N(6)-dimethyladenosine(1518)/N(6)-dimethyladenosine(1519) in 16S rRNA + 4 S-adenosyl-L-homocysteine + 4 H(+). In terms of biological role, specifically dimethylates two adjacent adenosines (A1518 and A1519) in the loop of a conserved hairpin near the 3'-end of 16S rRNA in the 30S particle. May play a critical role in biogenesis of 30S subunits. This Clostridioides difficile (strain 630) (Peptoclostridium difficile) protein is Ribosomal RNA small subunit methyltransferase A.